Reading from the N-terminus, the 488-residue chain is Lysine--tRNA ligase (488 aa).

Mg(2+) contacts are provided by Glu398 and Glu405.

Belongs to the class-II aminoacyl-tRNA synthetase family. In terms of assembly, homodimer. It depends on Mg(2+) as a cofactor.

It is found in the cytoplasm. It carries out the reaction tRNA(Lys) + L-lysine + ATP = L-lysyl-tRNA(Lys) + AMP + diphosphate. The protein is Lysine--tRNA ligase of Carboxydothermus hydrogenoformans (strain ATCC BAA-161 / DSM 6008 / Z-2901).